Here is a 261-residue protein sequence, read N- to C-terminus: Kallikrein 1-related peptidase b5 (261 aa).

The signal sequence occupies residues 1–18; it reads MWFLILFLALSLGGIDAA. Residues 19-24 constitute a propeptide, activation peptide; sequence PPVQSR. The 234-residue stretch at 25 to 258 folds into the Peptidase S1 domain; it reads IFGGFNCEKN…FNSWIKDTIA (234 aa). Disulfide bonds link cysteine 31–cysteine 173, cysteine 50–cysteine 66, cysteine 152–cysteine 219, cysteine 184–cysteine 198, and cysteine 209–cysteine 234. Catalysis depends on histidine 65, which acts as the Charge relay system. Asparagine 102 carries an N-linked (GlcNAc...) asparagine glycan. The active-site Charge relay system is aspartate 120. Residue serine 213 is the Charge relay system of the active site.

The protein belongs to the peptidase S1 family. Kallikrein subfamily.

The enzyme catalyses Preferential cleavage of Arg-|-Xaa bonds in small molecule substrates. Highly selective action to release kallidin (lysyl-bradykinin) from kininogen involves hydrolysis of Met-|-Xaa or Leu-|-Xaa.. In terms of biological role, glandular kallikreins cleave Met-Lys and Arg-Ser bonds in kininogen to release Lys-bradykinin. The chain is Kallikrein 1-related peptidase b5 (Klk1b5) from Mus musculus (Mouse).